Here is a 296-residue protein sequence, read N- to C-terminus: Phosphatidylserine decarboxylase proenzyme (296 aa).

Active-site charge relay system; for autoendoproteolytic cleavage activity residues include aspartate 113, histidine 169, and serine 256. Residue serine 256 is the Schiff-base intermediate with substrate; via pyruvic acid; for decarboxylase activity of the active site. Serine 256 carries the post-translational modification Pyruvic acid (Ser); by autocatalysis.

This sequence belongs to the phosphatidylserine decarboxylase family. PSD-B subfamily. Prokaryotic type II sub-subfamily. As to quaternary structure, heterodimer of a large membrane-associated beta subunit and a small pyruvoyl-containing alpha subunit. The cofactor is pyruvate. Is synthesized initially as an inactive proenzyme. Formation of the active enzyme involves a self-maturation process in which the active site pyruvoyl group is generated from an internal serine residue via an autocatalytic post-translational modification. Two non-identical subunits are generated from the proenzyme in this reaction, and the pyruvate is formed at the N-terminus of the alpha chain, which is derived from the carboxyl end of the proenzyme. The autoendoproteolytic cleavage occurs by a canonical serine protease mechanism, in which the side chain hydroxyl group of the serine supplies its oxygen atom to form the C-terminus of the beta chain, while the remainder of the serine residue undergoes an oxidative deamination to produce ammonia and the pyruvoyl prosthetic group on the alpha chain. During this reaction, the Ser that is part of the protease active site of the proenzyme becomes the pyruvoyl prosthetic group, which constitutes an essential element of the active site of the mature decarboxylase.

It localises to the cell membrane. It carries out the reaction a 1,2-diacyl-sn-glycero-3-phospho-L-serine + H(+) = a 1,2-diacyl-sn-glycero-3-phosphoethanolamine + CO2. Its pathway is phospholipid metabolism; phosphatidylethanolamine biosynthesis; phosphatidylethanolamine from CDP-diacylglycerol: step 2/2. Catalyzes the formation of phosphatidylethanolamine (PtdEtn) from phosphatidylserine (PtdSer). The polypeptide is Phosphatidylserine decarboxylase proenzyme (Clostridium botulinum (strain Eklund 17B / Type B)).